Here is a 443-residue protein sequence, read N- to C-terminus: Xaa-Pro dipeptidase (443 aa).

Residues Asp246, Asp257, His339, Glu384, and Glu423 each coordinate Mn(2+).

This sequence belongs to the peptidase M24B family. Bacterial-type prolidase subfamily. Mn(2+) is required as a cofactor.

The enzyme catalyses Xaa-L-Pro dipeptide + H2O = an L-alpha-amino acid + L-proline. Splits dipeptides with a prolyl residue in the C-terminal position. The polypeptide is Xaa-Pro dipeptidase (Pectobacterium atrosepticum (strain SCRI 1043 / ATCC BAA-672) (Erwinia carotovora subsp. atroseptica)).